A 438-amino-acid polypeptide reads, in one-letter code: tRNA-2-methylthio-N(6)-dimethylallyladenosine synthase (438 aa).

The region spanning 2 to 118 (KSFYLETFGC…LADMVRDAEL (117 aa)) is the MTTase N-terminal domain. 6 residues coordinate [4Fe-4S] cluster: Cys11, Cys47, Cys81, Cys157, Cys161, and Cys164. The 231-residue stretch at 143 to 373 (PSAEVSRFVT…LALQEEITRQ (231 aa)) folds into the Radical SAM core domain. Positions 376–438 (QMDIGQVLPV…YRNSHLGERV (63 aa)) constitute a TRAM domain.

This sequence belongs to the methylthiotransferase family. MiaB subfamily. In terms of assembly, monomer. [4Fe-4S] cluster serves as cofactor.

It is found in the cytoplasm. It carries out the reaction N(6)-dimethylallyladenosine(37) in tRNA + (sulfur carrier)-SH + AH2 + 2 S-adenosyl-L-methionine = 2-methylsulfanyl-N(6)-dimethylallyladenosine(37) in tRNA + (sulfur carrier)-H + 5'-deoxyadenosine + L-methionine + A + S-adenosyl-L-homocysteine + 2 H(+). Its function is as follows. Catalyzes the methylthiolation of N6-(dimethylallyl)adenosine (i(6)A), leading to the formation of 2-methylthio-N6-(dimethylallyl)adenosine (ms(2)i(6)A) at position 37 in tRNAs that read codons beginning with uridine. The sequence is that of tRNA-2-methylthio-N(6)-dimethylallyladenosine synthase from Syntrophotalea carbinolica (strain DSM 2380 / NBRC 103641 / GraBd1) (Pelobacter carbinolicus).